Consider the following 171-residue polypeptide: Neudesin (171 aa).

Positions 1–30 (MARPAPWWWLRPLAALALALALVRVPSARA) are cleaved as a signal peptide. A Cytochrome b5 heme-binding domain is found at 43–128 (VRLFTEEELA…KELEALDDIF (86 aa)). K135 carries the post-translational modification N6-acetyllysine. The interval 151-171 (GSPNLDFKPEDQPHFDIKDEF) is disordered. The span at 157 to 171 (FKPEDQPHFDIKDEF) shows a compositional bias: basic and acidic residues.

This sequence belongs to the cytochrome b5 family. MAPR subfamily. In terms of assembly, interacts with PINK1 and PARK7.

It is found in the secreted. Its subcellular location is the extracellular space. The protein resides in the mitochondrion. It localises to the endoplasmic reticulum. Its function is as follows. Acts as a neurotrophic factor in postnatal mature neurons enhancing neuronal survival. Promotes cell proliferation and neurogenesis in undifferentiated neural progenitor cells at the embryonic stage and inhibits differentiation of astrocytes. Its neurotrophic activity is exerted via MAPK1/ERK2, MAPK3/ERK1 and AKT1/AKT pathways. Neurotrophic activity is enhanced by binding to heme. Also acts as an anorexigenic neurotrophic factor that contributes to energy balance. The chain is Neudesin from Rattus norvegicus (Rat).